We begin with the raw amino-acid sequence, 317 residues long: Ribosomal RNA small subunit methyltransferase H (317 aa).

S-adenosyl-L-methionine contacts are provided by residues A37–H39, D56, F85, D106, and Q113.

It belongs to the methyltransferase superfamily. RsmH family.

It localises to the cytoplasm. It catalyses the reaction cytidine(1402) in 16S rRNA + S-adenosyl-L-methionine = N(4)-methylcytidine(1402) in 16S rRNA + S-adenosyl-L-homocysteine + H(+). Functionally, specifically methylates the N4 position of cytidine in position 1402 (C1402) of 16S rRNA. The chain is Ribosomal RNA small subunit methyltransferase H from Lactococcus lactis subsp. lactis (strain IL1403) (Streptococcus lactis).